Reading from the N-terminus, the 371-residue chain is Leu/Ile/Val-binding protein homolog 1 (371 aa).

The N-terminal stretch at 1–23 (MRKTLFSGVALAAVIAFGGSAWA) is a signal peptide.

The protein belongs to the leucine-binding protein family.

Functionally, component of an amino-acid transport system. The protein is Leu/Ile/Val-binding protein homolog 1 of Brucella abortus (strain 2308).